Reading from the N-terminus, the 420-residue chain is DNA repair protein RadA (420 aa).

62–69 (GDPGIGKS) is an ATP binding site. Residues 218–222 (KNRFG) carry the RadA KNRFG motif motif. The interval 317 to 420 (DAYLKSAGGV…IQEVLKKVFA (104 aa)) is lon-protease-like.

This sequence belongs to the RecA family. RadA subfamily.

Plays a role in repairing double-strand DNA breaks, probably involving stabilizing or processing branched DNA or blocked replication forks. Required for efficient transformation with chromosomal (linear) DNA, but not for replicative plasmid DNA. Its increased sensitivity to a DNA damaging agent suggests it may be required for DNA repair. The sequence is that of DNA repair protein RadA from Streptococcus pneumoniae (strain ATCC BAA-255 / R6).